The following is a 1202-amino-acid chain: DNA-directed RNA polymerase subunit beta (1202 aa).

The protein belongs to the RNA polymerase beta chain family. As to quaternary structure, the RNAP catalytic core consists of 2 alpha, 1 beta, 1 beta' and 1 omega subunit. When a sigma factor is associated with the core the holoenzyme is formed, which can initiate transcription.

The enzyme catalyses RNA(n) + a ribonucleoside 5'-triphosphate = RNA(n+1) + diphosphate. Its function is as follows. DNA-dependent RNA polymerase catalyzes the transcription of DNA into RNA using the four ribonucleoside triphosphates as substrates. In Leuconostoc mesenteroides subsp. mesenteroides (strain ATCC 8293 / DSM 20343 / BCRC 11652 / CCM 1803 / JCM 6124 / NCDO 523 / NBRC 100496 / NCIMB 8023 / NCTC 12954 / NRRL B-1118 / 37Y), this protein is DNA-directed RNA polymerase subunit beta.